We begin with the raw amino-acid sequence, 531 residues long: MAAVKTLNPKAEVARAQAALAVNISAARGLQDVLRTNLGPKGTMKMLVSGAGDIKLTKDGNVLLHEMQIQHPTASLIAKVATAQDDITGDGTTSNVLIIGELLKQADLYISEGLHPRIITEGFEAAKEKALQVLEQIKVSREMDRETLIDVARTSLRTKVHAELADVLTEAVVDSILAIKKQDEPIDLFMVEIMEMKHKSETDTSLIRGLVLDHGARHPDMKKRVEDAYILTCNVSLEYEKTEVNSGFFYKSAEEREKLVKAERKFIEDRVKKIVELKKKVCGDSDKGFVVINQKGIDPFSLDALAKEGIVALRRAKRRNMERLTLACGGVPLNSLDDLNPDCLGHAGLVYEYTLGEEKFTFIEKCNNPRSVTLLVKGPNKHTLTQIKDAIRDGLRAVKNAIDDGCVVPGAGAVEVAMAEALIKYKSSVKGRAQLGVQAFADALLIIPKVLAQNSGFDLQETLVKIRTEHSESGQLVGVDLNTGEPMVAAEVGIWDNYCVKKQLLHSCTVIATNILLVDEIMRAGMSSLKG.

Position 2 is an N-acetylalanine (A2). K5 carries the post-translational modification N6-acetyllysine. G39 is a binding site for ADP. ATP is bound at residue G39. Residue D90 coordinates Mg(2+). The ADP site is built by G91, T92, T93, S94, T158, and K159. Residues G91, T92, and T93 each coordinate ATP. K199 carries the N6-acetyllysine modification. A Phosphoserine modification is found at S205. K251 is covalently cross-linked (Glycyl lysine isopeptide (Lys-Gly) (interchain with G-Cter in SUMO2)). An N6-acetyllysine mark is found at K287, K365, K377, and K388. A411 provides a ligand contact to ADP. Positions 411, 412, 496, and 501 each coordinate ATP. ADP is bound at residue D496.

Belongs to the TCP-1 chaperonin family. In terms of assembly, component of the chaperonin-containing T-complex (TRiC), a hexadecamer composed of two identical back-to-back stacked rings enclosing a protein folding chamber. Each ring is made up of eight different subunits: TCP1/CCT1, CCT2, CCT3, CCT4, CCT5, CCT6A/CCT6, CCT7, CCT8. Interacts with PACRG.

It localises to the cytoplasm. It catalyses the reaction ATP + H2O = ADP + phosphate + H(+). Functionally, component of the chaperonin-containing T-complex (TRiC), a molecular chaperone complex that assists the folding of actin, tubulin and other proteins upon ATP hydrolysis. The TRiC complex mediates the folding of WRAP53/TCAB1, thereby regulating telomere maintenance. The polypeptide is T-complex protein 1 subunit zeta (CCT6) (Oryctolagus cuniculus (Rabbit)).